The following is a 163-amino-acid chain: Putative H/ACA ribonucleoprotein complex subunit 2-like protein (163 aa).

Positions 1–27 (MGKRNLDETMNESTVSEANGDATAPTT) are disordered.

The protein belongs to the eukaryotic ribosomal protein eL8 family. As to quaternary structure, component of the small nucleolar ribonucleoprotein particle containing H/ACA-type snoRNAs (H/ACA snoRNPs).

The protein localises to the nucleus. It localises to the nucleolus. Required for ribosome biogenesis. Part of a complex which catalyzes pseudouridylation of rRNA. This involves the isomerization of uridine such that the ribose is subsequently attached to C5, instead of the normal N1. Pseudouridine ('psi') residues may serve to stabilize the conformation of rRNAs. The sequence is that of Putative H/ACA ribonucleoprotein complex subunit 2-like protein from Caenorhabditis elegans.